The sequence spans 433 residues: MFSLPTLTSDITVEVNSSATKTPFVRRPVEPVGKFFLQHAQRTLRNHTWSEFERIEAEKNVKTVDESNVDPDELLFDTELADEDLLTHDARDWKTADLYAAMGLSKLRFRATESQIIKAHRKQVVKYHPDKQSAAGGSLDQDGFFKIIQKAFETLTDSNKRAQYDSCDFVADVPPPKKGTDYDFYEAWGPVFEAEARFSKKTPIPSLGNKDSSKKEVEQFYAFWHRFDSWRTFEFLDEDVPDDSSNRDHKRYIERKNKAARDKKKTADNARLVKLVERAVSEDPRIKMFKEEEKKEKERRKWEREAGARAEAEAKAKAEAEAKAKAESEAKANASAKADKKKAKEAAKAAKKKNKRAIRNSAKEADYFGDADKATTIDEQVGLIVDSLNDEELVSTADKIKANAAGAKEVLKESAKTIVDSGKLPSSLLSYFV.

Phosphoserine is present on Ser-50. The J domain maps to 98–170 (LYAAMGLSKL…RAQYDSCDFV (73 aa)). Over residues 292–330 (EEKKEKERRKWEREAGARAEAEAKAKAEAEAKAKAESEA) the composition is skewed to basic and acidic residues. Residues 292–357 (EEKKEKERRK…KAAKKKNKRA (66 aa)) form a disordered region.

In terms of assembly, RAC is a heterodimer of the Hsp70/DnaK-type chaperone SSZ1 and the Hsp40/DnaJ-type chaperone ZUO1. RAC associates with ribosomes via ZUO1.

The protein resides in the cytoplasm. In terms of biological role, component of the ribosome-associated complex (RAC), a heterodimeric chaperone complex involved in regulation of accurate translation termination and in folding or maintaining nascent polypeptides in a folding-competent state. RAC stimulates the ATPase activity of the ribosome-associated pool of Hsp70-type chaperones SSB1/SSB2 that bind to the nascent polypeptide chain. ZUO1 can act as a J-protein for SSB1/SSB2 only when associated with SSZ1. The protein is Zuotin (ZUO1) of Saccharomyces cerevisiae (strain ATCC 204508 / S288c) (Baker's yeast).